The chain runs to 457 residues: F-box only protein 13 (457 aa).

The F-box domain occupies 64-110 (EFPMDDLNDDVLERVLSWLPTSCFFRMSSVCKRWKSSQTSKSFKLAC).

This is F-box only protein 13 (FBX13) from Arabidopsis thaliana (Mouse-ear cress).